The chain runs to 141 residues: ATP synthase epsilon chain (141 aa).

Belongs to the ATPase epsilon chain family. In terms of assembly, F-type ATPases have 2 components, CF(1) - the catalytic core - and CF(0) - the membrane proton channel. CF(1) has five subunits: alpha(3), beta(3), gamma(1), delta(1), epsilon(1). CF(0) has three main subunits: a, b and c.

The protein resides in the cell inner membrane. Functionally, produces ATP from ADP in the presence of a proton gradient across the membrane. In Paraburkholderia phymatum (strain DSM 17167 / CIP 108236 / LMG 21445 / STM815) (Burkholderia phymatum), this protein is ATP synthase epsilon chain.